The following is a 311-amino-acid chain: Pyrimidine-specific ribonucleoside hydrolase RihA (311 aa).

The active site involves His240.

It belongs to the IUNH family. RihA subfamily.

Its function is as follows. Hydrolyzes with equal efficiency cytidine or uridine to ribose and cytosine or uracil, respectively. The chain is Pyrimidine-specific ribonucleoside hydrolase RihA from Escherichia coli O17:K52:H18 (strain UMN026 / ExPEC).